Reading from the N-terminus, the 776-residue chain is Protein translocase subunit SecA 2 (776 aa).

ATP is bound by residues glutamine 80, 98–102 (GEGKT), and aspartate 486.

Belongs to the SecA family. Monomer and homodimer. Part of the essential Sec protein translocation apparatus which comprises SecA, SecYEG and auxiliary proteins SecDF. Other proteins may also be involved.

It localises to the cell membrane. It is found in the cytoplasm. The catalysed reaction is ATP + H2O + cellular proteinSide 1 = ADP + phosphate + cellular proteinSide 2.. Part of the Sec protein translocase complex. Interacts with the SecYEG preprotein conducting channel. Has a central role in coupling the hydrolysis of ATP to the transfer of proteins into and across the cell membrane, serving as an ATP-driven molecular motor driving the stepwise translocation of polypeptide chains across the membrane. The polypeptide is Protein translocase subunit SecA 2 (Listeria welshimeri serovar 6b (strain ATCC 35897 / DSM 20650 / CCUG 15529 / CIP 8149 / NCTC 11857 / SLCC 5334 / V8)).